A 150-amino-acid chain; its full sequence is 3-dehydroquinate dehydratase (150 aa).

Catalysis depends on tyrosine 26, which acts as the Proton acceptor. Substrate is bound by residues asparagine 77, histidine 83, and aspartate 90. Histidine 103 functions as the Proton donor in the catalytic mechanism. Residues 104 to 105 (LS) and arginine 114 contribute to the substrate site.

The protein belongs to the type-II 3-dehydroquinase family. Homododecamer.

The catalysed reaction is 3-dehydroquinate = 3-dehydroshikimate + H2O. It functions in the pathway metabolic intermediate biosynthesis; chorismate biosynthesis; chorismate from D-erythrose 4-phosphate and phosphoenolpyruvate: step 3/7. Its function is as follows. Catalyzes a trans-dehydration via an enolate intermediate. In Citrobacter koseri (strain ATCC BAA-895 / CDC 4225-83 / SGSC4696), this protein is 3-dehydroquinate dehydratase.